Reading from the N-terminus, the 102-residue chain is Protamine-2 (102 aa).

A disordered region spans residues 1 to 102 (MVRCRVRSPS…RTRRRTCRRH (102 aa)). Phosphoserine occurs at positions 8, 10, and 37. A compositionally biased stretch (basic and acidic residues) spans 8-17 (SPSERSHEVY). A compositionally biased stretch (basic and acidic residues) spans 39-48 (EHVEVYERTH). The span at 49–102 (GHSHYRRRHCSRRRLRRIHRQQHRSCRRRKRRSCRHRRRHRKGCRTRRRTCRRH) shows a compositional bias: basic residues.

The protein belongs to the protamine P2 family. As to quaternary structure, interacts with TDRP. Proteolytic processing into mature chains is required for histone eviction during spermatogenesis. Transition proteins (TNP1 and TNP2) are required for processing. In terms of tissue distribution, testis.

It is found in the nucleus. It localises to the chromosome. Protamines substitute for histones in the chromatin of sperm during the haploid phase of spermatogenesis. They compact sperm DNA into a highly condensed, stable and inactive complex. The polypeptide is Protamine-2 (PRM2) (Gorilla gorilla gorilla (Western lowland gorilla)).